Here is a 372-residue protein sequence, read N- to C-terminus: Lipoyl synthase, mitochondrial (372 aa).

The transit peptide at 1 to 27 directs the protein to the mitochondrion; sequence MSLRCGDAARTLGPRVFGRYFCSPVRP. [4Fe-4S] cluster contacts are provided by Cys-106, Cys-111, Cys-117, Cys-137, Cys-141, Cys-144, and Ser-352. Positions 122–341 constitute a Radical SAM core domain; sequence EYATATATIM…EKVGNELGFH (220 aa).

Belongs to the radical SAM superfamily. Lipoyl synthase family. [4Fe-4S] cluster is required as a cofactor.

It localises to the mitochondrion. The catalysed reaction is [[Fe-S] cluster scaffold protein carrying a second [4Fe-4S](2+) cluster] + N(6)-octanoyl-L-lysyl-[protein] + 2 oxidized [2Fe-2S]-[ferredoxin] + 2 S-adenosyl-L-methionine + 4 H(+) = [[Fe-S] cluster scaffold protein] + N(6)-[(R)-dihydrolipoyl]-L-lysyl-[protein] + 4 Fe(3+) + 2 hydrogen sulfide + 2 5'-deoxyadenosine + 2 L-methionine + 2 reduced [2Fe-2S]-[ferredoxin]. Its pathway is protein modification; protein lipoylation via endogenous pathway; protein N(6)-(lipoyl)lysine from octanoyl-[acyl-carrier-protein]: step 2/2. Catalyzes the radical-mediated insertion of two sulfur atoms into the C-6 and C-8 positions of the octanoyl moiety bound to the lipoyl domains of lipoate-dependent enzymes, thereby converting the octanoylated domains into lipoylated derivatives. This is Lipoyl synthase, mitochondrial from Homo sapiens (Human).